We begin with the raw amino-acid sequence, 1452 residues long: MRGLGTCLATLAGLLLTAAGETFSGGCLFDEPYSTCGYSQSEGDDFNWEQVNTLTKPTSDPWMPSGSFMLVNASGRPEGQRAHLLLPQLKENDTHCIDFHYFVSSKSNSPPGLLNVYVKVNNGPLGNPIWNISGDPTRTWNRAELAISTFWPNFYQVIFEVITSGHQGYLAIDEVKVLGHPCTRTPHFLRIQNVEVNAGQFATFQCSAIGRTVAGDRLWLQGIDVRDAPLKEIKVTSSRRFIASFNVVNTTKRDAGKYRCMIRTEGGVGISNYAELVVKEPPVPIAPPQLASVGATYLWIQLNANSINGDGPIVAREVEYCTASGSWNDRQPVDSTSYKIGHLDPDTEYEISVLLTRPGEGGTGSPGPALRTRTKCADPMRGPRKLEVVEVKSRQITIRWEPFGYNVTRCHSYNLTVHYCYQVGGQEQVREEVSWDTENSHPQHTITNLSPYTNVSVKLILMNPEGRKESQELIVQTDEDLPGAVPTESIQGSTFEEKIFLQWREPTQTYGVITLYEITYKAVSSFDPEIDLSNQSGRVSKLGNETHFLFFGLYPGTTYSFTIRASTAKGFGPPATNQFTTKISAPSMPAYELETPLNQTDNTVTVMLKPAHSRGAPVSVYQIVVEEERPRRTKKTTEILKCYPVPIHFQNASLLNSQYYFAAEFPADSLQAAQPFTIGDNKTYNGYWNTPLLPYKSYRIYFQAASRANGETKIDCVQVATKGAATPKPVPEPEKQTDHTVKIAGVIAGILLFVIIFLGVVLVMKKRKLAKKRKETMSSTRQEMTVMVNSMDKSYAEQGTNCDEAFSFMDTHNLNGRSVSSPSSFTMKTNTLSTSVPNSYYPDETHTMASDTSSLVQSHTYKKREPADVPYQTGQLHPAIRVADLLQHITQMKCAEGYGFKEEYESFFEGQSAPWDSAKKDENRMKNRYGNIIAYDHSRVRLQTIEGDTNSDYINGNYIDGYHRPNHYIATQGPMQETIYDFWRMVWHENTASIIMVTNLVEVGRVKCCKYWPDDTEIYKDIKVTLIETELLAEYVIRTFAVEKRGVHEIREIRQFHFTGWPDHGVPYHATGLLGFVRQVKSKSPPSAGPLVVHCSAGAGRTGCFIVIDIMLDMAEREGVVDIYNCVRELRSRRVNMVQTEEQYVFIHDAILEACLCGDTSVPASQVRSLYYDMNKLDPQTNSSQIKEEFRTLNMVTPTLRVEDCSIALLPRNHEKNRCMDILPPDRCLPFLITIDGESSNYINAALMDSYKQPSAFIVTQHPLPNTVKDFWRLVLDYHCTSVVMLNDVDPAQLCPQYWPENGVHRHGPIQVEFVSADLEEDIISRIFRIYNAARPQDGYRMVQQFQFLGWPMYRDTPVSKRSFLKLIRQVDKWQEEYNGGEGRTVVHCLNGGGRSGTFCAISIVCEMLRHQRTVDVFHAVKTLRNNKPNMVDLLDQYKFCYEVALEYLNSG.

An N-terminal signal peptide occupies residues 1 to 20 (MRGLGTCLATLAGLLLTAAG). Residues 21-742 (ETFSGGCLFD…PEKQTDHTVK (722 aa)) are Extracellular-facing. The MAM domain occupies 22-184 (TFSGGCLFDE…VKVLGHPCTR (163 aa)). Cys-27 and Cys-36 are disulfide-bonded. N-linked (GlcNAc...) asparagine glycosylation is found at Asn-72, Asn-92, Asn-131, and Asn-249. Disulfide bonds link Cys-96–Cys-182 and Cys-206–Cys-260. Residues 186–277 (PHFLRIQNVE…VGISNYAELV (92 aa)) form the Ig-like C2-type domain. Fibronectin type-III domains lie at 284-379 (PIAP…CADP), 382-480 (GPRK…TDED), 482-587 (PGAV…SAPS), and 589-671 (PAYE…DSLQ). Asn-406, Asn-414, Asn-454, Asn-534, Asn-544, Asn-598, Asn-651, and Asn-681 each carry an N-linked (GlcNAc...) asparagine glycan. Residues 743-764 (IAGVIAGILLFVIIFLGVVLVM) traverse the membrane as a helical segment. The Cytoplasmic portion of the chain corresponds to 765–1452 (KKRKLAKKRK…EVALEYLNSG (688 aa)). Ser-821 carries the post-translational modification Phosphoserine. Tyrosine-protein phosphatase domains are found at residues 900–1154 (FKEE…ILEA) and 1186–1448 (IKEE…ALEY). Substrate is bound by residues Asp-1063, 1095 to 1101 (CSAGAGR), and Gln-1139. Cys-1095 serves as the catalytic Phosphocysteine intermediate. Cys-1389 serves as the catalytic Phosphocysteine intermediate.

This sequence belongs to the protein-tyrosine phosphatase family. Receptor class 2B subfamily. As to quaternary structure, homodimer.

It is found in the cell membrane. It carries out the reaction O-phospho-L-tyrosyl-[protein] + H2O = L-tyrosyl-[protein] + phosphate. In terms of biological role, receptor protein-tyrosine phosphatase that mediates homotypic cell-cell interactions and plays a role in adipogenic differentiation via modulation of p120 catenin/CTNND1 phosphorylation. Promotes CTNND1 dephosphorylation and prevents its cytoplasmic localization where it inhibits SLC2A4 membrane trafficking. In turn, SLC2A4 is directed to the plasma membrane and performs its glucose transporter function. In Homo sapiens (Human), this protein is Receptor-type tyrosine-protein phosphatase mu (PTPRM).